We begin with the raw amino-acid sequence, 462 residues long: Alanine racemase (462 aa).

The active-site Proton acceptor; specific for D-alanine is Lys-34. Lys-34 bears the N6-(pyridoxal phosphate)lysine mark. The interval 73–132 is unknown insert; sequence ASWHESVFRHCEKNYTVIRRSNPVKNSVSQNFFNYFSGLQQCFAPRNDGSSIHATTPKAL. A substrate-binding site is contributed by Arg-193. The RPE1 insert domain occupies 286–332; that stretch reads DLSNNLSYKEEFEGDTERRTAAYINVREDSSTGSTYKLPLEGGYSRG. The active-site Proton acceptor; specific for L-alanine is the Tyr-357. A substrate-binding site is contributed by Met-405.

Belongs to the alanine racemase family. The cofactor is pyridoxal 5'-phosphate.

It catalyses the reaction L-alanine = D-alanine. It participates in amino-acid biosynthesis; D-alanine biosynthesis; D-alanine from L-alanine: step 1/1. Catalyzes the interconversion of L-alanine and D-alanine. May also act on other amino acids. In Rickettsia felis (strain ATCC VR-1525 / URRWXCal2) (Rickettsia azadi), this protein is Alanine racemase (alr).